The sequence spans 224 residues: Germin-like protein 8-9 (224 aa).

A signal peptide spans 1–22 (MASPSFCLFAALLALVSWQAIA). A disulfide bridge connects residues Cys32 and Cys47. The 151-residue stretch at 62–212 (AMLDTPRKTN…AFQVGKGTID (151 aa)) folds into the Cupin type-1 domain. Asn76 carries an N-linked (GlcNAc...) asparagine glycan. Residues His109, His111, and Glu116 each coordinate Mn(2+). An N-linked (GlcNAc...) asparagine glycan is attached at Asn135. His157 lines the Mn(2+) pocket.

Belongs to the germin family. As to quaternary structure, oligomer (believed to be a pentamer but probably hexamer).

The protein localises to the secreted. The protein resides in the extracellular space. It localises to the apoplast. Functionally, plays a role in broad-spectrum disease resistance. Probably has no oxalate oxidase activity even if the active site is conserved. This chain is Germin-like protein 8-9, found in Oryza sativa subsp. japonica (Rice).